The chain runs to 254 residues: Nickel import ATP-binding protein NikD (254 aa).

One can recognise an ABC transporter domain in the interval 2–241 (PQQIELRNIA…PKHTVTRSLV (240 aa)). Residue 36-43 (GGSGSGKS) coordinates ATP.

The protein belongs to the ABC transporter superfamily. Nickel importer (TC 3.A.1.5.3) family. As to quaternary structure, the complex is composed of two ATP-binding proteins (NikD and NikE), two transmembrane proteins (NikB and NikC) and a solute-binding protein (NikA).

Its subcellular location is the cell inner membrane. The catalysed reaction is Ni(2+)(out) + ATP + H2O = Ni(2+)(in) + ADP + phosphate + H(+). In terms of biological role, part of the ABC transporter complex NikABCDE involved in nickel import. Responsible for energy coupling to the transport system. The protein is Nickel import ATP-binding protein NikD of Escherichia coli (strain K12).